We begin with the raw amino-acid sequence, 785 residues long: MRVPFSWLKAYVPELESPEVLEERLAGLGFETDRIERVFPIPRGVVFARVLEAHPIPGTRLKRLVLDAGQAVEVVSGAENARKGIGVALALPGTELPGLGQKVGERVIQGVRSFGMALSPRELGVGEYGGGLLEFPEDALPPGTPLAEAWPEEVVLDLEVTPNRPDALGLLGLARDLHALGYALVEPEAALKAEALPLPFALKVEDPEGAPHFTLGYAFGLRVAPSPLWMQRALFAAGMRPINNVVDVTNYVMLERAQPMHAFDLRFIGEGILVRRARPGERLRTLDGVERTLHPEDLVIAGWRGEESFPLGLAGVMGGAESEVREDTEAIALEVACFDPVSIRKTARRHGLRTEASHRFERGVDPLGQVPAQRRALSLLQALAGARVAEALLEAGSPKPPEAIPFRPEYANRLLGTSYPEAEQIAILKRLGCRVEGQGPAYRVTPPSHRLDLRLEEDLVEEVARIQGYETIPLALPAFFPAPDNRGVEAPYRKERRLRELLSGLGFQEVYTYSFMDPEDARRFRLDPPRLLLLNPLAPEKAALRTHLFPGLVRVLKENLDLDRPERALLFEVGRVFREREETHLAGLLFGEGVGLPWAKERLSGYFLLKGYLEALFARLGLAFRVEAQVFPFLHPGVSGRVLVEGEEVGFLGALHPEIAQELELPPVHLFELRLPLPDKPLAFQDPSRHPAAFRDLAVVVPAPTPYGEVEALVREAAGPYLESLVLFDLYQGPPLPEGHKSLAFHLRFRHPKRTLRDEEVEEAVSRVAEALRARGFGLRGLDTP.

In terms of domain architecture, tRNA-binding spans 39–147 (FPIPRGVVFA…DALPPGTPLA (109 aa)). One can recognise a B5 domain in the interval 399–474 (KPPEAIPFRP…RIQGYETIPL (76 aa)). Mg(2+)-binding residues include Asp-452, Asp-458, Glu-461, and Glu-462. The 93-residue stretch at 688 to 780 (SRHPAAFRDL…ALRARGFGLR (93 aa)) folds into the FDX-ACB domain.

The protein belongs to the phenylalanyl-tRNA synthetase beta subunit family. Type 1 subfamily. Tetramer of two alpha and two beta subunits. Requires Mg(2+) as cofactor.

It is found in the cytoplasm. It carries out the reaction tRNA(Phe) + L-phenylalanine + ATP = L-phenylalanyl-tRNA(Phe) + AMP + diphosphate + H(+). This chain is Phenylalanine--tRNA ligase beta subunit, found in Thermus thermophilus (strain ATCC BAA-163 / DSM 7039 / HB27).